We begin with the raw amino-acid sequence, 326 residues long: GTP 3',8-cyclase (326 aa).

One can recognise a Radical SAM core domain in the interval Gly-7–Arg-232. Arg-16 lines the GTP pocket. Cys-23 and Cys-27 together coordinate [4Fe-4S] cluster. Tyr-29 lines the S-adenosyl-L-methionine pocket. Cys-30 lines the [4Fe-4S] cluster pocket. Arg-65 is a binding site for GTP. Gly-69 is an S-adenosyl-L-methionine binding site. Thr-96 serves as a coordination point for GTP. Position 120 (Ser-120) interacts with S-adenosyl-L-methionine. Lys-157 is a GTP binding site. Residue Met-191 participates in S-adenosyl-L-methionine binding. The [4Fe-4S] cluster site is built by Cys-254 and Cys-257. Position 259–261 (Arg-259–Arg-261) interacts with GTP. A [4Fe-4S] cluster-binding site is contributed by Cys-271.

This sequence belongs to the radical SAM superfamily. MoaA family. In terms of assembly, monomer and homodimer. It depends on [4Fe-4S] cluster as a cofactor.

It catalyses the reaction GTP + AH2 + S-adenosyl-L-methionine = (8S)-3',8-cyclo-7,8-dihydroguanosine 5'-triphosphate + 5'-deoxyadenosine + L-methionine + A + H(+). It functions in the pathway cofactor biosynthesis; molybdopterin biosynthesis. In terms of biological role, catalyzes the cyclization of GTP to (8S)-3',8-cyclo-7,8-dihydroguanosine 5'-triphosphate. The sequence is that of GTP 3',8-cyclase from Stenotrophomonas maltophilia (strain R551-3).